A 135-amino-acid chain; its full sequence is Mediator of RNA polymerase II transcription subunit 10 (135 aa).

Belongs to the Mediator complex subunit 10 family. Component of the Mediator complex, which is composed of MED1, MED4, MED6, MED7, MED8, MED9, MED10, MED11, MED12, MED13, MED13L, MED14, MED15, MED16, MED17, MED18, MED19, MED20, MED21, MED22, MED23, MED24, MED25, MED26, MED27, MED29, MED30, MED31, CCNC, CDK8 and CDC2L6/CDK11. The MED12, MED13, CCNC and CDK8 subunits form a distinct module termed the CDK8 module. Mediator containing the CDK8 module is less active than Mediator lacking this module in supporting transcriptional activation. Individual preparations of the Mediator complex lacking one or more distinct subunits have been variously termed ARC, CRSP, DRIP, PC2, SMCC and TRAP.

It localises to the nucleus. In terms of biological role, component of the Mediator complex, a coactivator involved in the regulated transcription of nearly all RNA polymerase II-dependent genes. Mediator functions as a bridge to convey information from gene-specific regulatory proteins to the basal RNA polymerase II transcription machinery. Mediator is recruited to promoters by direct interactions with regulatory proteins and serves as a scaffold for the assembly of a functional preinitiation complex with RNA polymerase II and the general transcription factors. In Mus musculus (Mouse), this protein is Mediator of RNA polymerase II transcription subunit 10 (Med10).